Reading from the N-terminus, the 427-residue chain is Trigger factor (427 aa).

The PPIase FKBP-type domain occupies 163–248 (GDTVVIDFVG…IHEVKEKEVP (86 aa)).

This sequence belongs to the FKBP-type PPIase family. Tig subfamily.

The protein localises to the cytoplasm. It catalyses the reaction [protein]-peptidylproline (omega=180) = [protein]-peptidylproline (omega=0). In terms of biological role, involved in protein export. Acts as a chaperone by maintaining the newly synthesized protein in an open conformation. Functions as a peptidyl-prolyl cis-trans isomerase. The sequence is that of Trigger factor from Streptococcus gordonii (strain Challis / ATCC 35105 / BCRC 15272 / CH1 / DL1 / V288).